A 154-amino-acid polypeptide reads, in one-letter code: 6,7-dimethyl-8-ribityllumazine synthase (154 aa).

5-amino-6-(D-ribitylamino)uracil is bound by residues tryptophan 22, 56–58 (AWE), and 80–82 (CVI). 85–86 (DT) provides a ligand contact to (2S)-2-hydroxy-3-oxobutyl phosphate. The active-site Proton donor is histidine 88. Asparagine 113 is a binding site for 5-amino-6-(D-ribitylamino)uracil. Arginine 127 provides a ligand contact to (2S)-2-hydroxy-3-oxobutyl phosphate.

This sequence belongs to the DMRL synthase family. Forms an icosahedral capsid composed of 60 subunits, arranged as a dodecamer of pentamers.

It carries out the reaction (2S)-2-hydroxy-3-oxobutyl phosphate + 5-amino-6-(D-ribitylamino)uracil = 6,7-dimethyl-8-(1-D-ribityl)lumazine + phosphate + 2 H2O + H(+). It functions in the pathway cofactor biosynthesis; riboflavin biosynthesis; riboflavin from 2-hydroxy-3-oxobutyl phosphate and 5-amino-6-(D-ribitylamino)uracil: step 1/2. Functionally, catalyzes the formation of 6,7-dimethyl-8-ribityllumazine by condensation of 5-amino-6-(D-ribitylamino)uracil with 3,4-dihydroxy-2-butanone 4-phosphate. This is the penultimate step in the biosynthesis of riboflavin. The protein is 6,7-dimethyl-8-ribityllumazine synthase of Xanthomonas oryzae pv. oryzae (strain MAFF 311018).